The primary structure comprises 401 residues: (1R,4R,5S)-(-)-guaia-6,10(14)-diene synthase (401 aa).

Mg(2+)-binding residues include Asp134 and Glu139. The DDXXD motif motif lies at 134–138; sequence DDQFD. Arg242 is a substrate binding site. Mg(2+) contacts are provided by Asn288 and Ser292. Lys295 provides a ligand contact to substrate. Asp296 is a Mg(2+) binding site. 375-376 lines the substrate pocket; it reads RY.

It belongs to the terpene synthase family. Mg(2+) is required as a cofactor.

The enzyme catalyses (2E,6E)-farnesyl diphosphate = (1R,4R,5S)-(-)-guaia-6,10(14)-diene + diphosphate. Its pathway is secondary metabolite biosynthesis; terpenoid biosynthesis. In terms of biological role, catalyzes the conversion of (2E,6E)-farnesyl diphosphate (FPP) to yield the bicyclic sesquiterpene guaia-6,10(14)-diene via a 1,10-cyclization, which requires the abstraction of the pyrophosphate from FPP to yield the (E,E)-germacradienyl cation. The only accepted substrate is farnesyl diphosphate (FPP). The chain is (1R,4R,5S)-(-)-guaia-6,10(14)-diene synthase from Fusarium mangiferae (Mango malformation disease fungus).